The following is a 27-amino-acid chain: Nucleoside diphosphate kinase 2 (27 aa).

K3 serves as a coordination point for ATP.

This sequence belongs to the NDK family. It depends on Mg(2+) as a cofactor.

The enzyme catalyses a 2'-deoxyribonucleoside 5'-diphosphate + ATP = a 2'-deoxyribonucleoside 5'-triphosphate + ADP. It catalyses the reaction a ribonucleoside 5'-diphosphate + ATP = a ribonucleoside 5'-triphosphate + ADP. In terms of biological role, major role in the synthesis of nucleoside triphosphates other than ATP. The ATP gamma phosphate is transferred to the NDP beta phosphate via a ping-pong mechanism, using a phosphorylated active-site intermediate. The sequence is that of Nucleoside diphosphate kinase 2 from Pseudotsuga menziesii (Douglas-fir).